Reading from the N-terminus, the 294-residue chain is Ribosomal protein L11 methyltransferase (294 aa).

4 residues coordinate S-adenosyl-L-methionine: Thr-144, Gly-165, Asp-187, and Asn-229.

Belongs to the methyltransferase superfamily. PrmA family.

The protein resides in the cytoplasm. The enzyme catalyses L-lysyl-[protein] + 3 S-adenosyl-L-methionine = N(6),N(6),N(6)-trimethyl-L-lysyl-[protein] + 3 S-adenosyl-L-homocysteine + 3 H(+). Methylates ribosomal protein L11. The chain is Ribosomal protein L11 methyltransferase from Cellvibrio japonicus (strain Ueda107) (Pseudomonas fluorescens subsp. cellulosa).